Consider the following 259-residue polypeptide: Adenosylcobinamide-GDP ribazoletransferase (259 aa).

The next 6 helical transmembrane spans lie at N9 to V29, L43 to V63, S64 to H84, A118 to F138, V143 to F163, and V196 to I216.

This sequence belongs to the CobS family. Requires Mg(2+) as cofactor.

It is found in the cell inner membrane. It carries out the reaction alpha-ribazole + adenosylcob(III)inamide-GDP = adenosylcob(III)alamin + GMP + H(+). The catalysed reaction is alpha-ribazole 5'-phosphate + adenosylcob(III)inamide-GDP = adenosylcob(III)alamin 5'-phosphate + GMP + H(+). Its pathway is cofactor biosynthesis; adenosylcobalamin biosynthesis; adenosylcobalamin from cob(II)yrinate a,c-diamide: step 7/7. Its function is as follows. Joins adenosylcobinamide-GDP and alpha-ribazole to generate adenosylcobalamin (Ado-cobalamin). Also synthesizes adenosylcobalamin 5'-phosphate from adenosylcobinamide-GDP and alpha-ribazole 5'-phosphate. The protein is Adenosylcobinamide-GDP ribazoletransferase of Shewanella halifaxensis (strain HAW-EB4).